A 142-amino-acid polypeptide reads, in one-letter code: Coactosin-like protein (142 aa).

A2 is subject to N-acetylalanine. The ADF-H domain occupies 2-130 (ATKIDKEACR…EEDFIRSELK (129 aa)). Residue S23 is modified to Phosphoserine. A flexible and important for F-actin binding region spans residues 66–75 (TGDAMSKRSK). K102 carries the N6-acetyllysine modification. Position 141 is a phosphoserine (S141).

The protein belongs to the actin-binding proteins ADF family. Coactosin subfamily. Interacts with 5-lipoxygenase (ALOX5/5LO) in a calcium-independent manner. Binds to F-actin with a stoichiometry of 1:2.

The protein localises to the cytoplasm. It is found in the cytoskeleton. The protein resides in the nucleus. Its function is as follows. Binds to F-actin in a calcium-independent manner. Has no direct effect on actin depolymerization. Acts as a chaperone for ALOX5 (5LO), influencing both its stability and activity in leukotrienes synthesis. This Rattus norvegicus (Rat) protein is Coactosin-like protein.